A 116-amino-acid polypeptide reads, in one-letter code: Large ribosomal subunit protein bL20 (116 aa).

It belongs to the bacterial ribosomal protein bL20 family.

Its function is as follows. Binds directly to 23S ribosomal RNA and is necessary for the in vitro assembly process of the 50S ribosomal subunit. It is not involved in the protein synthesizing functions of that subunit. This Helicobacter pylori (strain Shi470) protein is Large ribosomal subunit protein bL20.